Here is a 266-residue protein sequence, read N- to C-terminus: Large ribosomal subunit protein eL8 (266 aa).

Glycyl lysine isopeptide (Lys-Gly) (interchain with G-Cter in SUMO2) cross-links involve residues Lys11, Lys20, and Lys21. Residue Lys34 is modified to N6-acetyllysine. Lys48 is covalently cross-linked (Glycyl lysine isopeptide (Lys-Gly) (interchain with G-Cter in SUMO2)). Position 97 is an N6-acetyllysine; alternate (Lys97). Lys97 is covalently cross-linked (Glycyl lysine isopeptide (Lys-Gly) (interchain with G-Cter in SUMO2); alternate). A Glycyl lysine isopeptide (Lys-Gly) (interchain with G-Cter in SUMO2) cross-link involves residue Lys125. An N6-acetyllysine modification is found at Lys217. Residue Lys245 forms a Glycyl lysine isopeptide (Lys-Gly) (interchain with G-Cter in SUMO2) linkage.

The protein belongs to the eukaryotic ribosomal protein eL8 family. Component of the large ribosomal subunit. Interacts with CRY1. Interacts with DICER1, AGO2, TARBP2, MOV10 and EIF6; they form a large RNA-induced silencing complex (RISC).

It localises to the cytoplasm. Its function is as follows. Component of the large ribosomal subunit. The ribosome is a large ribonucleoprotein complex responsible for the synthesis of proteins in the cell. In Mus musculus (Mouse), this protein is Large ribosomal subunit protein eL8 (Rpl7a).